Reading from the N-terminus, the 283-residue chain is 4-diphosphocytidyl-2-C-methyl-D-erythritol kinase (283 aa).

K10 is an active-site residue. 99 to 109 (PMGGGLGGGSS) contributes to the ATP binding site. D141 is a catalytic residue.

Belongs to the GHMP kinase family. IspE subfamily. Homodimer.

It catalyses the reaction 4-CDP-2-C-methyl-D-erythritol + ATP = 4-CDP-2-C-methyl-D-erythritol 2-phosphate + ADP + H(+). It participates in isoprenoid biosynthesis; isopentenyl diphosphate biosynthesis via DXP pathway; isopentenyl diphosphate from 1-deoxy-D-xylulose 5-phosphate: step 3/6. Functionally, catalyzes the phosphorylation of the position 2 hydroxy group of 4-diphosphocytidyl-2C-methyl-D-erythritol. The chain is 4-diphosphocytidyl-2-C-methyl-D-erythritol kinase from Citrobacter koseri (strain ATCC BAA-895 / CDC 4225-83 / SGSC4696).